Here is a 57-residue protein sequence, read N- to C-terminus: Large ribosomal subunit protein bL33 (57 aa).

Belongs to the bacterial ribosomal protein bL33 family.

This is Large ribosomal subunit protein bL33 from Akkermansia muciniphila (strain ATCC BAA-835 / DSM 22959 / JCM 33894 / BCRC 81048 / CCUG 64013 / CIP 107961 / Muc).